Here is a 79-residue protein sequence, read N- to C-terminus: Conotoxin ArMSGL-0122 (79 aa).

An N-terminal signal peptide occupies residues Met1–Ser20. A propeptide spanning residues His21–Thr44 is cleaved from the precursor. Intrachain disulfides connect Cys52–Cys64, Cys56–Cys73, and Cys63–Cys77. At Leu78 the chain carries Leucine amide.

This sequence belongs to the conotoxin O3 superfamily. As to expression, expressed by the venom duct.

It is found in the secreted. The polypeptide is Conotoxin ArMSGL-0122 (Conus arenatus (Sand-dusted cone)).